The chain runs to 503 residues: MEEFKGYFEFDRTRQQNFLYPLFFRESFYVLAYDHGLNRLNRNRSIFLENADYDKKYGSLIVKRLILRMYEQNHLIIPTKDLNHNPFFGHTNLFYYQMISVLFAVIVEIQFSLKLVSSFEGKLLKKSYNLKSIHSLFPFLEDKLLHFNYVVDVRIPYPIHLEILVQTLRYRVKDASSLHFFRFCLYEYCNYKNFDIQKKSILNPRFFLFLYNSHVCEYESLFLFLRKRSSHLRSTSSEVVFERILFYGKIQHLVKVFVNFPSILGFLKDPLIHYVRYHGKCILATKDTPLLMNKRKYYFVNLWQSYFSVWLQSEKVNINQLSKDTLEFLGYLSSLQLNPLVVRSQMLKNSFLIDNVRIKFDTKIPISSIIGSLSKEKFCNVLGHPVSKSSWTDSSDSEIRERFVRICRNLSHYYSGSSKKKNLYRIKYILRLCCVKTLARKHKSTVRAFLKRLGSGLLEEFLTGEGQIISLIFPRSYYASKRLYRNRIWYLDILFFNDLVNHE.

This sequence belongs to the intron maturase 2 family. MatK subfamily.

It is found in the plastid. Its subcellular location is the chloroplast. In terms of biological role, usually encoded in the trnK tRNA gene intron. Probably assists in splicing its own and other chloroplast group II introns. The chain is Maturase K from Aethionema cordifolium (Lebanon stonecress).